The sequence spans 185 residues: Celestoxin (185 aa).

The first 20 residues, 1-20 (MKFIAAVLLVALLCPKDSTS), serve as a signal peptide directing secretion. A propeptide spanning residues 21-148 (LASRLSGLLG…GLPVALPVSV (128 aa)) is cleaved from the precursor.

Expressed by the mandibular venom gland.

The protein localises to the secreted. Functionally, has a hypotensive activity. This Caribicus warreni (Haitian giant galliwasp) protein is Celestoxin.